The chain runs to 1501 residues: 1-phosphatidylinositol 4,5-bisphosphate phosphodiesterase eta-2 (1501 aa).

The segment at 28–47 (RGFSGLQGGRRRGRGEKGIP) is disordered. Positions 75–229 (MPGPQPSAAS…WVTGLRYLMA (155 aa)) are necessary for plasma membrane localization. Positions 121 to 229 (SAMQEGTQMV…WVTGLRYLMA (109 aa)) constitute a PH domain. 2 EF-hand domains span residues 243–278 (TRDQ…LNVN) and 279–315 (LPRQ…MSTR). Ca(2+)-binding residues include Asp256, Asn258, Asp260, Ser262, and Glu267. Residues 400–545 (QDMTQPLSHY…LKGKILVKGK (146 aa)) form the PI-PLC X-box domain. Residue His415 is part of the active site. The Ca(2+) site is built by Asn416, Glu445, and Asp447. His459 is an active-site residue. Glu494 lines the Ca(2+) pocket. Substrate contacts are provided by Lys543 and Lys545. Disordered stretches follow at residues 551–570 (ISED…DEME) and 609–700 (DPND…QKKT). Residues 553 to 570 (EDAEEGEVSDEDSADEME) are compositionally biased toward acidic residues. Phosphoserine occurs at positions 561 and 565. The segment covering 626 to 638 (RKAEAKKGQSKVE) has biased composition (basic and acidic residues). Positions 662-673 (SKRKKKGSKIKK) are enriched in basic residues. 2 positions are modified to phosphoserine: Ser676 and Ser686. Residues 707-821 (LSDLVKYTKS…GYVLKPQCMC (115 aa)) form the PI-PLC Y-box domain. Substrate-binding residues include Ser734 and Arg761. The C2 domain occupies 821–950 (CQGVFNPNSE…PGYRHVYLEG (130 aa)). 6 residues coordinate Ca(2+): Ile865, Asp867, Asp891, Asp920, His921, and Asp922. Disordered stretches follow at residues 986–1073 (GSLD…RLFP), 1089–1238 (EEPA…SSND), 1273–1305 (SAAR…DELQ), and 1398–1469 (GDIT…GACS). The segment covering 1089-1107 (EEPALGPGLPLQAAAPTGP) has biased composition (low complexity). Basic and acidic residues-rich tracts occupy residues 1142-1151 (GGRENEEPPL) and 1215-1227 (LWQR…HRDS). Residues 1421-1439 (RRSSSRSQSRVRAIASRAR) are compositionally biased toward low complexity. Positions 1440–1463 (QAQERQQRLRGQDSRGPPEEERGT) are enriched in basic and acidic residues.

It depends on Ca(2+) as a cofactor. As to expression, specifically detected in the brain, with higher level in cerebral cortex, olfactory bulb and hippocampus (at protein level). Expressed in the pyramidal cells of the hippocampus, but also in eye and lung.

The protein resides in the cytoplasm. It localises to the cell membrane. The enzyme catalyses a 1,2-diacyl-sn-glycero-3-phospho-(1D-myo-inositol-4,5-bisphosphate) + H2O = 1D-myo-inositol 1,4,5-trisphosphate + a 1,2-diacyl-sn-glycerol + H(+). Its activity is regulated as follows. Activity is stimulated by GNB1:GNG2. Functionally, the production of the second messenger molecules diacylglycerol (DAG) and inositol 1,4,5-trisphosphate (IP3) is mediated by activated phosphatidylinositol-specific phospholipase C enzymes. This phospholipase activity is very sensitive to calcium. May be important for formation and maintenance of the neuronal network in the postnatal brain. The polypeptide is 1-phosphatidylinositol 4,5-bisphosphate phosphodiesterase eta-2 (Mus musculus (Mouse)).